Here is a 348-residue protein sequence, read N- to C-terminus: D-alanine--D-alanine ligase (348 aa).

Residues 132–334 enclose the ATP-grasp domain; that stretch reads KRVLESIGIP…YPDLIEELVT (203 aa). 162–217 is a binding site for ATP; that stretch reads LARLTFPIFVKPANMGSSVGISKAQTKVELRKAIQLALTYDSRVLIEQGVVAREIE. Mg(2+)-binding residues include aspartate 288, glutamate 301, and asparagine 303.

The protein belongs to the D-alanine--D-alanine ligase family. Mg(2+) is required as a cofactor. Mn(2+) serves as cofactor.

It localises to the cytoplasm. The catalysed reaction is 2 D-alanine + ATP = D-alanyl-D-alanine + ADP + phosphate + H(+). It participates in cell wall biogenesis; peptidoglycan biosynthesis. In terms of biological role, cell wall formation. The sequence is that of D-alanine--D-alanine ligase from Streptococcus pyogenes serotype M12 (strain MGAS2096).